We begin with the raw amino-acid sequence, 504 residues long: Sugar transport protein 14 (504 aa).

Over Met1–Tyr25 the chain is Cytoplasmic. 12 consecutive transmembrane segments (helical) span residues Phe26–Val46, Ile84–Ser104, Val121–Leu141, Ile144–Met164, Gly171–Ile191, Leu205–Pro225, Leu286–Tyr308, Ser315–Ala337, Phe352–Leu372, Leu382–Gly402, Val428–Leu448, and Gly454–Leu474. At Pro475–Glu504 the chain is on the cytoplasmic side.

It belongs to the major facilitator superfamily. Sugar transporter (TC 2.A.1.1) family.

Its subcellular location is the membrane. Its function is as follows. Mediates an active uptake of hexoses, probably by sugar/hydrogen symport. The chain is Sugar transport protein 14 (STP14) from Arabidopsis thaliana (Mouse-ear cress).